The chain runs to 907 residues: Schlafen family member 13 (907 aa).

The tract at residues Met1–Pro353 is n'-domain region. Residues Glu205 and Glu210 contribute to the active site. The Zn(2+) site is built by His281, Cys283, and Cys318. Residue Gly604 to Thr611 participates in ATP binding.

This sequence belongs to the Schlafen family. Subgroup III subfamily. Mg(2+) serves as cofactor.

It is found in the cytoplasm. In terms of biological role, endoribonuclease that cleaves tRNAs and rRNAs. Cleaves tRNAs 11 nucleotides from the 3'-terminus at the acceptor stem. Does not act on tRNA(Sec). The protein is Schlafen family member 13 of Rattus norvegicus (Rat).